A 363-amino-acid chain; its full sequence is Dihydroorotate dehydrogenase (quinone) (363 aa).

FMN is bound by residues 67–71 (AGYDK) and Thr-91. Position 71 (Lys-71) interacts with substrate. 116 to 120 (NRMGF) is a substrate binding site. 2 residues coordinate FMN: Asn-145 and Asn-178. Asn-178 provides a ligand contact to substrate. Ser-181 acts as the Nucleophile in catalysis. Asn-183 is a substrate binding site. Positions 224 and 254 each coordinate FMN. Residue 255-256 (NT) participates in substrate binding. Residues Gly-275, Gly-304, and 325–326 (YS) each bind FMN.

This sequence belongs to the dihydroorotate dehydrogenase family. Type 2 subfamily. Monomer. FMN is required as a cofactor.

It localises to the cell membrane. It catalyses the reaction (S)-dihydroorotate + a quinone = orotate + a quinol. The protein operates within pyrimidine metabolism; UMP biosynthesis via de novo pathway; orotate from (S)-dihydroorotate (quinone route): step 1/1. Catalyzes the conversion of dihydroorotate to orotate with quinone as electron acceptor. The polypeptide is Dihydroorotate dehydrogenase (quinone) (Acidithiobacillus ferrooxidans (strain ATCC 23270 / DSM 14882 / CIP 104768 / NCIMB 8455) (Ferrobacillus ferrooxidans (strain ATCC 23270))).